The primary structure comprises 185 residues: MKIINPILPIIENILGNLTALQAEGKITTQPIERVALQWYESERNILRKTTNTGREVAFRLLKEGQRLKHDDVVFISDELVIAIEILPSDVIVLSPKTLPEMARACYEIGNKHSPLFLDGDEVILPYDKPMFEWLQAAGFHPQKAERRLSQALRANSAQGHGHSHSHSHDHHGYHHHGDGHWHKH.

Residues 153-185 (LRANSAQGHGHSHSHSHDHHGYHHHGDGHWHKH) form a disordered region. A compositionally biased stretch (basic residues) spans 162-175 (GHSHSHSHDHHGYH). The span at 176–185 (HHGDGHWHKH) shows a compositional bias: basic and acidic residues.

This sequence belongs to the UreE family.

The protein resides in the cytoplasm. In terms of biological role, involved in urease metallocenter assembly. Binds nickel. Probably functions as a nickel donor during metallocenter assembly. The protein is Urease accessory protein UreE of Haemophilus influenzae (strain PittEE).